The primary structure comprises 177 residues: CCHC-type zinc finger nucleic acid binding protein (177 aa).

Position 2 is an N-acetylserine (serine 2). The CCHC-type 1 zinc finger occupies 4–21 (NECFKCGRSGHWARECPT). Residue lysine 8 is modified to N6-acetyllysine. An omega-N-methylarginine; by PRMT1 mark is found at arginine 25 and arginine 27. The interval 25–38 (RGRGMRSRGRGGFT) is RNA-binding Arg/Gly-rich region (RGG-box). Omega-N-methylarginine occurs at positions 32 and 34. A Phosphoserine modification is found at serine 49. CCHC-type zinc fingers lie at residues 52–69 (DICY…DCDL), 72–89 (DACY…DCKE), 96–113 (QCCY…DCDH), 117–134 (QKCY…DCTK), 135–152 (VKCY…NCSK), and 156–173 (VNCY…ECTI). Omega-N-methylarginine is present on residues alanine 73, arginine 79, and glycine 80.

As to quaternary structure, associates with the 40S ribosomal subunit, the 80S ribosome and with polysomes. In terms of processing, arginine methylation by PRMT1 in the Arg/Gly-rich region impedes RNA binding. As to expression, expressed in the liver, kidney, spleen, testis, lung, muscle and adrenal glands.

It localises to the nucleus. Its subcellular location is the cytoplasm. It is found in the endoplasmic reticulum. Functionally, single-stranded DNA-binding protein that preferentially binds to the sterol regulatory element (SRE) sequence 5'-GTGCGGTG-3', and thereby mediates transcriptional repression. Has a role as transactivator of the Myc promoter. Binds single-stranded RNA in a sequence-specific manner. In terms of biological role, binds G-rich elements in target mRNA coding sequences. Prevents G-quadruplex structure formation in vitro, suggesting a role in supporting translation by resolving stable structures on mRNAs. Binds to RNA. The polypeptide is CCHC-type zinc finger nucleic acid binding protein (Homo sapiens (Human)).